The sequence spans 387 residues: Eukaryotic translation initiation factor 3 subunit M (387 aa).

One can recognise a PCI domain in the interval 181-340; sequence RSSKVMIELL…RKVHISSTMH (160 aa).

It belongs to the eIF-3 subunit M family. Component of the eukaryotic translation initiation factor 3 (eIF-3) complex. The eIF-3 complex interacts with pix.

It localises to the cytoplasm. Its subcellular location is the golgi apparatus. Its function is as follows. Component of the eukaryotic translation initiation factor 3 (eIF-3) complex, which is involved in protein synthesis of a specialized repertoire of mRNAs and, together with other initiation factors, stimulates binding of mRNA and methionyl-tRNAi to the 40S ribosome. The eIF-3 complex specifically targets and initiates translation of a subset of mRNAs involved in cell proliferation. The protein is Eukaryotic translation initiation factor 3 subunit M of Drosophila willistoni (Fruit fly).